Here is a 357-residue protein sequence, read N- to C-terminus: Protein-glutamate methylesterase/protein-glutamine glutaminase 5 (357 aa).

Residues 10-127 (RVLVVDDSSF…IDAQKAFKEE (118 aa)) form the Response regulatory domain. Asp-61 is subject to 4-aspartylphosphate. Residues 161 to 357 (PRPAGQRYQY…IGTEITKIAG (197 aa)) enclose the CheB-type methylesterase domain. Residues Ser-176, His-203, and Asp-301 contribute to the active site.

Belongs to the CheB family. Post-translationally, phosphorylated by CheA. Phosphorylation of the N-terminal regulatory domain activates the methylesterase activity.

It is found in the cytoplasm. The catalysed reaction is [protein]-L-glutamate 5-O-methyl ester + H2O = L-glutamyl-[protein] + methanol + H(+). It catalyses the reaction L-glutaminyl-[protein] + H2O = L-glutamyl-[protein] + NH4(+). In terms of biological role, involved in chemotaxis. Part of a chemotaxis signal transduction system that modulates chemotaxis in response to various stimuli. Catalyzes the demethylation of specific methylglutamate residues introduced into the chemoreceptors (methyl-accepting chemotaxis proteins or MCP) by CheR. Also mediates the irreversible deamidation of specific glutamine residues to glutamic acid. This is Protein-glutamate methylesterase/protein-glutamine glutaminase 5 from Geobacter metallireducens (strain ATCC 53774 / DSM 7210 / GS-15).